Here is a 312-residue protein sequence, read N- to C-terminus: Olfactory receptor 10D3 (312 aa).

The Extracellular portion of the chain corresponds to 1–26 (MEVKNCCMVTEFILLGIPHTEGLEMT). A helical membrane pass occupies residues 27-47 (LFVLFLPFYACTLLGNVSILV). The Cytoplasmic segment spans residues 48–57 (AVMSSARLHT). The helical transmembrane segment at 58–78 (PMYFFLGNLSVFDMGFSSVTC) threads the bilayer. Residues 79 to 97 (PKMLLYLMGLSRLISYKDC) lie on the Extracellular side of the membrane. Cys-97 and Cys-179 form a disulfide bridge. The chain crosses the membrane as a helical span at residues 98–118 (VCQLFFFHFLGSIECFLFTVM). The Cytoplasmic segment spans residues 119 to 139 (AYDRFTAICYPLRYTVIMNPR). A helical transmembrane segment spans residues 140-160 (ICVALAVGTWLLGCIHSSILT). At 161–197 (SLTFTLPYCGPNEVDHFFCDIPALLPLACADTSLAQR) the chain is on the extracellular side. A helical membrane pass occupies residues 198–218 (VSFTNVGLISLVCFLLILLSY). Residues 219–239 (TRITISILSIRTTEGRRRAFS) lie on the Cytoplasmic side of the membrane. The chain crosses the membrane as a helical span at residues 240-260 (TCSAHLIAILCAYGPIITVYL). Residues 261-266 (QPTPNP) are Extracellular-facing. A helical transmembrane segment spans residues 267-287 (MLGTVVQILMNLVGPMLNPLI). The Cytoplasmic segment spans residues 288 to 312 (YTLRNKEVKTALKTILHRTGHVPES).

The protein belongs to the G-protein coupled receptor 1 family.

The protein localises to the cell membrane. Odorant receptor. The chain is Olfactory receptor 10D3 from Homo sapiens (Human).